A 300-amino-acid polypeptide reads, in one-letter code: Ornithine carbamoyltransferase (300 aa).

Carbamoyl phosphate contacts are provided by residues 49–52, Gln-76, Arg-100, and 127–130; these read STRT and HPCQ. L-ornithine is bound by residues Asn-158, Asp-218, and 222–223; that span reads SM. Residues 258–259 and Arg-286 each bind carbamoyl phosphate; that span reads CL.

Belongs to the aspartate/ornithine carbamoyltransferase superfamily. OTCase family.

It is found in the cytoplasm. It catalyses the reaction carbamoyl phosphate + L-ornithine = L-citrulline + phosphate + H(+). It participates in amino-acid biosynthesis; L-arginine biosynthesis; L-arginine from L-ornithine and carbamoyl phosphate: step 1/3. Reversibly catalyzes the transfer of the carbamoyl group from carbamoyl phosphate (CP) to the N(epsilon) atom of ornithine (ORN) to produce L-citrulline. The chain is Ornithine carbamoyltransferase from Oleidesulfovibrio alaskensis (strain ATCC BAA-1058 / DSM 17464 / G20) (Desulfovibrio alaskensis).